We begin with the raw amino-acid sequence, 221 residues long: Protein GrpE (221 aa).

Positions methionine 1–alanine 43 are disordered. Over residues arginine 8–asparagine 20 the composition is skewed to basic and acidic residues.

This sequence belongs to the GrpE family. As to quaternary structure, homodimer.

It localises to the cytoplasm. Participates actively in the response to hyperosmotic and heat shock by preventing the aggregation of stress-denatured proteins, in association with DnaK and GrpE. It is the nucleotide exchange factor for DnaK and may function as a thermosensor. Unfolded proteins bind initially to DnaJ; upon interaction with the DnaJ-bound protein, DnaK hydrolyzes its bound ATP, resulting in the formation of a stable complex. GrpE releases ADP from DnaK; ATP binding to DnaK triggers the release of the substrate protein, thus completing the reaction cycle. Several rounds of ATP-dependent interactions between DnaJ, DnaK and GrpE are required for fully efficient folding. The polypeptide is Protein GrpE (Deinococcus radiodurans (strain ATCC 13939 / DSM 20539 / JCM 16871 / CCUG 27074 / LMG 4051 / NBRC 15346 / NCIMB 9279 / VKM B-1422 / R1)).